The chain runs to 215 residues: C-type lectin domain family 4 member D (215 aa).

The Cytoplasmic segment spans residues 1-17 (MGLEKPQSKLEGGMHPQ). Residues 18–38 (LIPSVIAVVFILLLSVCFIAS) traverse the membrane as a helical; Signal-anchor for type II membrane protein segment. Residues 39–215 (CLVTHHNFSR…ICKIPGTTLN (177 aa)) are Extracellular-facing. N-linked (GlcNAc...) asparagine glycosylation occurs at Asn-45. Cys-84 and Cys-95 are joined by a disulfide. Residues 91-208 (FQSNCYFPLT…CNFEASRICK (118 aa)) enclose the C-type lectin domain. Residues Asn-102 and Asn-111 are each glycosylated (N-linked (GlcNAc...) asparagine). 2 disulfides stabilise this stretch: Cys-112–Cys-207 and Cys-182–Cys-199. Positions 173, 175, 195, and 196 each coordinate Ca(2+).

Heterodimer with CLEC4E; disulfide-linked. CLEC4E acts as a bridge for interaction between CLEC4D and FCER1G to form a functional complex. Heterodimer with CLEC6A; this heterodimer forms a pattern recognition receptor (PRR) against fungal infection. In terms of tissue distribution, expressed weakly in peripheral blood leukocytes, bone marrow and spleen. Expression is confined mostly in monocytes and macrophage and seems to be up-regulated by IL-6, IL-10, TNF-alpha and IFN-gamma.

It is found in the cell membrane. In terms of biological role, calcium-dependent lectin that acts as a pattern recognition receptor (PRR) of the innate immune system: recognizes damage-associated molecular patterns (DAMPs) of pathogen-associated molecular patterns (PAMPs) of bacteria and fungi. The PAMPs include alpha-mannans on C.albicans hypheas and mycobacterial trehalose 6,6'-dimycolate (TDM). Interacts with signaling adapter Fc receptor gamma chain/FCER1G, likely via CLEC4E, to form a functional complex in myeloid cells. Binding of mycobacterial TDM or C.albicans alpha-mannans to this receptor complex leads to phosphorylation of the immunoreceptor tyrosine-based activation motif (ITAM) of FCER1G, triggering activation of SYK, CARD9 and NF-kappa-B, consequently driving maturation of antigen-presenting cells and shaping antigen-specific priming of T-cells toward effector T-helper 1 and T-helper 17 cell subtypes. The heterodimer formed with CLEC6A is active against fungal infection. Functions as an endocytic receptor. May be involved in antigen uptake at the site of infection, either for clearance of the antigen, or for processing and further presentation to T-cells. In Homo sapiens (Human), this protein is C-type lectin domain family 4 member D.